Here is a 232-residue protein sequence, read N- to C-terminus: Phosphoribosylformylglycinamidine synthase subunit PurQ (232 aa).

The 230-residue stretch at 3-232 folds into the Glutamine amidotransferase type-1 domain; sequence FAVIVFPGSN…SLVASALAVV (230 aa). The active-site Nucleophile is the Cys-86. Catalysis depends on residues His-203 and Glu-205.

In terms of assembly, part of the FGAM synthase complex composed of 1 PurL, 1 PurQ and 2 PurS subunits.

It localises to the cytoplasm. It catalyses the reaction N(2)-formyl-N(1)-(5-phospho-beta-D-ribosyl)glycinamide + L-glutamine + ATP + H2O = 2-formamido-N(1)-(5-O-phospho-beta-D-ribosyl)acetamidine + L-glutamate + ADP + phosphate + H(+). It carries out the reaction L-glutamine + H2O = L-glutamate + NH4(+). The protein operates within purine metabolism; IMP biosynthesis via de novo pathway; 5-amino-1-(5-phospho-D-ribosyl)imidazole from N(2)-formyl-N(1)-(5-phospho-D-ribosyl)glycinamide: step 1/2. Functionally, part of the phosphoribosylformylglycinamidine synthase complex involved in the purines biosynthetic pathway. Catalyzes the ATP-dependent conversion of formylglycinamide ribonucleotide (FGAR) and glutamine to yield formylglycinamidine ribonucleotide (FGAM) and glutamate. The FGAM synthase complex is composed of three subunits. PurQ produces an ammonia molecule by converting glutamine to glutamate. PurL transfers the ammonia molecule to FGAR to form FGAM in an ATP-dependent manner. PurS interacts with PurQ and PurL and is thought to assist in the transfer of the ammonia molecule from PurQ to PurL. This chain is Phosphoribosylformylglycinamidine synthase subunit PurQ, found in Gloeobacter violaceus (strain ATCC 29082 / PCC 7421).